The primary structure comprises 529 residues: Transcription factor kayak (529 aa).

Positions 118 to 134 (LQGTDSDNSNASWADAQ) are enriched in polar residues. Disordered regions lie at residues 118–166 (LQGT…SVNG) and 180–239 (NAGR…CRKR). 2 stretches are compositionally biased toward low complexity: residues 142-153 (TDTSSAHTDSTS) and 182-201 (GRGS…TPAR). Residues 219–282 (EEKRRIRRER…NQLEFFLRAH (64 aa)) form the bZIP domain. A basic motif region spans residues 221–240 (KRRIRRERNKQAAARCRKRR). The interval 247–275 (LTYEVEQLEKKRDGLKKEMETLTDVKNQL) is leucine-zipper. Disordered regions lie at residues 311–390 (AGSC…PMST) and 493–529 (DGGT…LVSL). A compositionally biased stretch (low complexity) spans 315-332 (DSGSSSHHNNNSNDSSNG). A compositionally biased stretch (polar residues) spans 340–350 (SLNSTGRSNSP). Position 349 is a phosphoserine (Ser349). Positions 363-375 (DGGLDSSCLLDQD) are enriched in low complexity. The span at 376-387 (GPPPSKRFPLPP) shows a compositional bias: pro residues.

The protein belongs to the bZIP family. Fos subfamily. Homodimer. Heterodimer with Jra. The kay-Jra heterodimer binds more stably to the AP-1 site than either of the two proteins alone.

Its subcellular location is the nucleus. Developmentally regulated transcription factor AP-1 binds and recognizes the enhancer DNA sequence: 5'-TGA[CG]TCA-3'. May play a role in the function or determination of a particular subset of cells in the developing embryo. Is able to carry out its function either independently of or in conjunction with Jra. The protein is Transcription factor kayak of Drosophila ananassae (Fruit fly).